Reading from the N-terminus, the 870-residue chain is NEDD4-like E3 ubiquitin-protein ligase WWP2 (870 aa).

The region spanning 1-117 (MASASSSRAG…KNNGGKMENM (117 aa)) is the C2 domain. Residues 151-299 (VPNGSALTDG…QQLPAAAQAP (149 aa)) form a disordered region. Polar residues-rich tracts occupy residues 152–171 (PNGS…SSGT) and 200–210 (SARTTPATGEQ). Position 211 is a phosphoserine (serine 211). 2 stretches are compositionally biased toward polar residues: residues 222–243 (VKNS…TTAT) and 263–272 (VTPNPNTTSL). Low complexity predominate over residues 290–299 (QQLPAAAQAP). 4 consecutive WW domains span residues 300–333 (DALP…RPLP), 330–363 (RPLP…RPTA), 405–437 (GPLP…DPRT), and 444–477 (PALP…DPRP). Positions 536-870 (KPYDLRRRLY…IEETEGFGQE (335 aa)) constitute an HECT domain. Cysteine 838 (glycyl thioester intermediate) is an active-site residue.

Interacts with POU5F1, RBP1, EGR2 and SLC11A2. Interacts with SCNN1A, SCNN1B, SCNN1G, WBP1, WBP2 and ATN1. Interacts with ERBB4, NDFIP1 and NDFIP2. Interacts with ARRDC4. Interacts (via WW domains) with ARRDC1 (via PPxY motifs); ubiquitinates ARRDC1. Interacts (via WW domains) with ARRDC2 and ARRDC3. As to quaternary structure, (Microbial infection) Interacts with adenovirus type 2 PIII. In terms of processing, autoubiquitinated. Ubiquitinated by the SCF(FBXL15) complex, leading to its degradation by the proteasome. Detected in heart, throughout the brain, placenta, lung, liver, muscle, kidney and pancreas. Also detected in spleen and peripheral blood leukocytes.

Its subcellular location is the nucleus. It catalyses the reaction S-ubiquitinyl-[E2 ubiquitin-conjugating enzyme]-L-cysteine + [acceptor protein]-L-lysine = [E2 ubiquitin-conjugating enzyme]-L-cysteine + N(6)-ubiquitinyl-[acceptor protein]-L-lysine.. Its pathway is protein modification; protein ubiquitination. With respect to regulation, activated by NDFIP1- and NDFIP2-binding. In terms of biological role, E3 ubiquitin-protein ligase which accepts ubiquitin from an E2 ubiquitin-conjugating enzyme in the form of a thioester and then directly transfers the ubiquitin to targeted substrates. Polyubiquitinates POU5F1 by 'Lys-63'-linked conjugation and promotes it to proteasomal degradation; in embryonic stem cells (ESCs) the ubiquitination is proposed to regulate POU5F1 protein level. Ubiquitinates EGR2 and promotes it to proteasomal degradation; in T-cells the ubiquitination inhibits activation-induced cell death. Ubiquitinates SLC11A2; the ubiquitination is enhanced by presence of NDFIP1 and NDFIP2. Ubiquitinates RPB1 and promotes it to proteasomal degradation. This Homo sapiens (Human) protein is NEDD4-like E3 ubiquitin-protein ligase WWP2 (WWP2).